Here is a 240-residue protein sequence, read N- to C-terminus: Homeobox protein notochord (240 aa).

Residues 1–13 are compositionally biased toward polar residues; that stretch reads MSSPAPSGTQVQP. Disordered regions lie at residues 1-21 and 208-240; these read MSSPAPSGTQVQPGSLRPCPG and QKLKLPSSSVMEEPSSSSDGNIQSEDAELGIGS. The homeobox DNA-binding region spans 149 to 208; that stretch reads TKRVRTTFNLQQLQELEKVFAKQHNLVGKERAQLAARLHLTENQVRIWFQNRRVKYQKQQ. The span at 213–225 shows a compositional bias: low complexity; the sequence is PSSSVMEEPSSSS.

Its subcellular location is the nucleus. In terms of biological role, transcription factor that controls node morphogenesis. Acts downstream of both FOXA2 and Brachyury (T) during notochord development. Is essential for cilia formation in the posterior notochord (PNC) and for left-right patterning; acts upstream of FOXJ1 and RFX3 in this process and is required for the expression of various components important for axonemal assembly and function. Plays a role in regulating axial versus paraxial cell fate. Activates the transcription of ciliary proteins C11orf97 homolog, FAM183B and SPACA9 in the embryonic ventral node. This chain is Homeobox protein notochord (Noto), found in Mus musculus (Mouse).